Reading from the N-terminus, the 332-residue chain is Beta-ketoacyl-[acyl-carrier-protein] synthase III 2 (332 aa).

Active-site residues include C115 and H252. The segment at 253-257 (SANLR) is ACP-binding. Residue N282 is part of the active site.

Belongs to the thiolase-like superfamily. FabH family. Homodimer.

It is found in the cytoplasm. It carries out the reaction malonyl-[ACP] + acetyl-CoA + H(+) = 3-oxobutanoyl-[ACP] + CO2 + CoA. The protein operates within lipid metabolism; fatty acid biosynthesis. Functionally, catalyzes the condensation reaction of fatty acid synthesis by the addition to an acyl acceptor of two carbons from malonyl-ACP. Catalyzes the first condensation reaction which initiates fatty acid synthesis and may therefore play a role in governing the total rate of fatty acid production. Possesses both acetoacetyl-ACP synthase and acetyl transacylase activities. Its substrate specificity determines the biosynthesis of branched-chain and/or straight-chain of fatty acids. This chain is Beta-ketoacyl-[acyl-carrier-protein] synthase III 2, found in Halalkalibacterium halodurans (strain ATCC BAA-125 / DSM 18197 / FERM 7344 / JCM 9153 / C-125) (Bacillus halodurans).